Consider the following 381-residue polypeptide: Creatine kinase M-type (381 aa).

The Phosphagen kinase N-terminal domain occupies K11 to G98. The Phosphagen kinase C-terminal domain maps to Y125–L367. ATP-binding positions include S128–R132, H191, R236, R292, R320–V325, and D335.

It belongs to the ATP:guanido phosphotransferase family. In terms of assembly, dimer of identical or non-identical chains. With MM being the major form in skeletal muscle and myocardium, MB existing in myocardium, and BB existing in many tissues, especially brain.

The protein resides in the cytoplasm. It carries out the reaction creatine + ATP = N-phosphocreatine + ADP + H(+). Its function is as follows. Reversibly catalyzes the transfer of phosphate between ATP and various phosphogens (e.g. creatine phosphate). Creatine kinase isoenzymes play a central role in energy transduction in tissues with large, fluctuating energy demands, such as skeletal muscle, heart, brain and spermatozoa. The polypeptide is Creatine kinase M-type (Tetronarce californica (Pacific electric ray)).